The following is a 468-amino-acid chain: Maltose fermentation regulatory protein MAL33 (468 aa).

Residues 8–34 (CDYCRVRRVKCDGKKPCSRCIEHNFDC) constitute a DNA-binding region (zn(2)-C6 fungal-type). The Nuclear localization signal signature appears at 41–49 (KKRGSKPIG).

This sequence belongs to the MAL13 family.

It localises to the nucleus. Regulates the coordinate transcription of structural MAL3S (maltase) and MAL3T (maltose permease) genes. This Saccharomyces cerevisiae (strain ATCC 204508 / S288c) (Baker's yeast) protein is Maltose fermentation regulatory protein MAL33 (MAL33).